The following is a 155-amino-acid chain: Large ribosomal subunit protein uL22c (155 aa).

This sequence belongs to the universal ribosomal protein uL22 family. As to quaternary structure, part of the 50S ribosomal subunit.

It is found in the plastid. Its subcellular location is the chloroplast. Functionally, this protein binds specifically to 23S rRNA. In terms of biological role, the globular domain of the protein is located near the polypeptide exit tunnel on the outside of the subunit, while an extended beta-hairpin is found that lines the wall of the exit tunnel in the center of the 70S ribosome. This is Large ribosomal subunit protein uL22c (rpl22) from Solanum bulbocastanum (Wild potato).